The following is a 443-amino-acid chain: uncharacterized protein (443 aa).

4 consecutive transmembrane segments (helical) span residues 15–35, 38–58, 59–79, and 181–201; these read IYAG…DGLA, LGMA…GPGS, AWQG…LSWL, and VVTA…IPAL. Residues 231–270 form a 4 X 10 AA approximate repeats region; it reads NFGIGNIGNANLGNGNIGNANLGSGNAGFFNFGNGNDGNT.

This sequence belongs to the mycobacterial PPE family.

Its subcellular location is the cell membrane. This is an uncharacterized protein from Mycobacterium tuberculosis (strain ATCC 25618 / H37Rv).